A 371-amino-acid chain; its full sequence is Chitin deacetylase (371 aa).

The N-terminal stretch at 1–20 (MLCRLFTLFITAALACCVAA) is a signal peptide. A disordered region spans residues 73–112 (PKPEPEPTAVPTMAPEPTTVPPTEPSGTYPPETTPTVEPT). Composition is skewed to low complexity over residues 79-89 (PTAVPTMAPEP) and 102-112 (PPETTPTVEPT). Cys-164 and Cys-358 are oxidised to a cystine. N-linked (GlcNAc...) asparagine glycosylation occurs at Asn-167. Positions 168–353 (GTIALTFDDG…EIKKRGLRAV (186 aa)) constitute a NodB homology domain. Catalysis depends on Asp-175, which acts as the Proton acceptor. Residue Asp-175 coordinates acetate. Co(2+) contacts are provided by Asp-176, His-228, and His-232. Residue Asn-239 is glycosylated (N-linked (GlcNAc...) asparagine). Acetate is bound at residue Tyr-270. The active-site Proton donor is His-327.

This sequence belongs to the polysaccharide deacetylase family. Requires Co(2+) as cofactor.

It catalyses the reaction [(1-&gt;4)-N-acetyl-beta-D-glucosaminyl](n) + n H2O = chitosan + n acetate. Functionally, hydrolyzes the N-acetamido groups of N-acetyl-D-glucosamine residues in chitin to form chitosan and acetate. This is Chitin deacetylase from Arthroderma benhamiae (strain ATCC MYA-4681 / CBS 112371) (Trichophyton mentagrophytes).